The sequence spans 351 residues: DNA polymerase IV (351 aa).

The UmuC domain occupies 4–185 (IIHVDMDCFF…LPLAKIPGVG (182 aa)). Residues Asp8 and Asp103 each contribute to the Mg(2+) site. Residue Glu104 is part of the active site.

This sequence belongs to the DNA polymerase type-Y family. Monomer. Mg(2+) is required as a cofactor.

The protein resides in the cytoplasm. The catalysed reaction is DNA(n) + a 2'-deoxyribonucleoside 5'-triphosphate = DNA(n+1) + diphosphate. In terms of biological role, poorly processive, error-prone DNA polymerase involved in untargeted mutagenesis. Copies undamaged DNA at stalled replication forks, which arise in vivo from mismatched or misaligned primer ends. These misaligned primers can be extended by PolIV. Exhibits no 3'-5' exonuclease (proofreading) activity. May be involved in translesional synthesis, in conjunction with the beta clamp from PolIII. This Salmonella arizonae (strain ATCC BAA-731 / CDC346-86 / RSK2980) protein is DNA polymerase IV.